Consider the following 261-residue polypeptide: MESDCQFLVAPPQPHMYYDTAAAAVDEAQFLRQMVAAADHHAAAAGRGGGDGDGGGGGGGGGERKRRFTEEQVRSLETTFHARRAKLEPREKAELARELGLQPRQVAIWFQNKRARWRSKQIEHDYAALRAQYDALHARVESLRQEKLALADQVDELRGKLNERQDQSGSCDGGGAEGDDDDKRNSVMNASSSGLVEEDYVSCLAVPVVDVSEDGSAACGGSSYEYDHHLDYLGGGQLPDPFCGMPDLWEIWPMVEWNAVA.

Disordered stretches follow at residues 42-67 (AAAA…RKRR) and 160-188 (KLNE…NSVM). A compositionally biased stretch (gly residues) spans 46 to 61 (GRGGGDGDGGGGGGGG). Positions 61 to 121 (GGERKRRFTE…NKRARWRSKQ (61 aa)) form a DNA-binding region, homeobox. The leucine-zipper stretch occupies residues 120-164 (KQIEHDYAALRAQYDALHARVESLRQEKLALADQVDELRGKLNER).

Belongs to the HD-ZIP homeobox family. Class I subfamily. Expressed in roots and panicles.

It is found in the nucleus. Functionally, probable transcription factor. This Oryza sativa subsp. japonica (Rice) protein is Homeobox-leucine zipper protein HOX24 (HOX24).